The primary structure comprises 95 residues: UPF0213 protein YPK_3712 (95 aa).

One can recognise a GIY-YIG domain in the interval 4–79; the sequence is SLWHLYLLRT…KQLSKQQKEK (76 aa).

It belongs to the UPF0213 family.

The chain is UPF0213 protein YPK_3712 from Yersinia pseudotuberculosis serotype O:3 (strain YPIII).